A 116-amino-acid polypeptide reads, in one-letter code: RNA guanine-N7 methyltransferase activating subunit (116 aa).

The tract at residues 1–55 (MAEALGAQELYEKMFEQRFTANDKEYQEYLKREQDQPPIVEDWKMGNQRNTDRYR) is interaction with RNMT. Residues 31–116 (KREQDQPPIV…SNQRFHSDRY (86 aa)) form a disordered region. The RNMT-activating domain signature appears at 36-42 (QPPIVED). The RNA-binding stretch occupies residues 56–116 (DNRHHRGWDG…SNQRFHSDRY (61 aa)). Over residues 67–78 (QNWSSNSYNQSY) the composition is skewed to low complexity. The segment covering 97–110 (YQQGHYTHNPSNQR) has biased composition (polar residues).

Belongs to the RAM family.

Its subcellular location is the nucleus. Regulatory subunit of the mRNA-capping methyltransferase RNMT:RAMAC complex that methylates the N7 position of the added guanosine to the 5'-cap structure of mRNAs. Promotes the recruitment of the methyl donor, S-adenosyl-L-methionine, to RNMT. Regulates RNMT expression by a post-transcriptional stabilizing mechanism. Binds RNA. The sequence is that of RNA guanine-N7 methyltransferase activating subunit (ramac) from Xenopus tropicalis (Western clawed frog).